The chain runs to 296 residues: Polyamine aminopropyltransferase (296 aa).

Positions 16–251 (HLWYFEYYTG…GMWSYTFASK (236 aa)) constitute a PABS domain. Glutamine 46 contributes to the S-methyl-5'-thioadenosine binding site. Histidine 77 and aspartate 101 together coordinate spermidine. S-methyl-5'-thioadenosine contacts are provided by residues glutamate 121 and 152–153 (NG). Aspartate 170 serves as the catalytic Proton acceptor. 170-173 (DSTD) is a spermidine binding site.

The protein belongs to the spermidine/spermine synthase family. As to quaternary structure, homotetramer.

It localises to the cytoplasm. It carries out the reaction S-adenosyl 3-(methylsulfanyl)propylamine + putrescine = S-methyl-5'-thioadenosine + spermidine + H(+). It participates in amine and polyamine biosynthesis; spermidine biosynthesis; spermidine from putrescine: step 1/1. With respect to regulation, strongly inhibited by S-adenosyl-1,8-diamino-3-thiooctane. Catalyzes the irreversible transfer of a propylamine group from the amino donor S-adenosylmethioninamine (decarboxy-AdoMet) to putrescine (1,4-diaminobutane) to yield spermidine. It has lower affinity and lower activity towards 1,3-diaminopropane, cadaverine (1,5-diaminopentane), agmatine, norspermidine and spermidine (in vitro). The chain is Polyamine aminopropyltransferase from Thermotoga maritima (strain ATCC 43589 / DSM 3109 / JCM 10099 / NBRC 100826 / MSB8).